The following is a 1873-amino-acid chain: Voltage-dependent L-type calcium channel subunit alpha-1S (1873 aa).

The disordered stretch occupies residues 1–23 (MEPSSPQDEGLRKKQPKKPVPEI). Residues 1–51 (MEPSSPQDEGLRKKQPKKPVPEILPRPPRALFCLTLENPLRKACISIVEWK) are Cytoplasmic-facing. Residues 38–337 (NPLRKACISI…LVLGVLSGEF (300 aa)) form an I repeat. A helical membrane pass occupies residues 52 to 70 (PFETIILLTIFANCVALAV). Residues 71-85 (YLPMPEDDNNSLNLG) are Extracellular-facing. An N-linked (GlcNAc...) asparagine glycan is attached at asparagine 79. A helical membrane pass occupies residues 86–106 (LEKLEYFFLIVFSIEAAMKII). The Cytoplasmic segment spans residues 107–115 (AYGFLFHQD). Residues 116–136 (AYLRSGWNVLDFTIVFLGVFT) form a helical membrane-spanning segment. Residues 137–160 (VILEQVNVIQSHTAPMSSKGAGLD) lie on the Extracellular side of the membrane. Residues 161–179 (VKALRAFRVLRPLRLVSGV) form a helical membrane-spanning segment. Over 180 to 196 (PSLQVVLNSIFKAMLPL) the chain is Cytoplasmic. Residues 197-218 (FHIALLVLFMVIIYAIIGLELF) form a helical membrane-spanning segment. Topologically, residues 219–279 (KGKMHKTCYF…HGITHFDNFG (61 aa)) are extracellular. 2 disulfides stabilise this stretch: cysteine 226/cysteine 254 and cysteine 245/cysteine 261. Asparagine 257 carries an N-linked (GlcNAc...) asparagine glycan. An intramembrane region (pore-forming) is located at residues 280–301 (FSMLTVYQCITMEGWTDVLYWV). Positions 290-293 (TMEG) match the Selectivity filter of repeat I motif. Residue glutamate 292 coordinates Ca(2+). Over 302–309 (NDAIGNEW) the chain is Extracellular. Residues 310-330 (PWIYFVTLILLGSFFILNLVL) form a helical membrane-spanning segment. Residues 331 to 432 (GVLSGEFTKE…WKCHDIVKSK (102 aa)) lie on the Cytoplasmic side of the membrane. Residues 357–374 (QQLDEDLRGYMSWITQGE) form a binding to the beta subunit region. 2 positions are modified to phosphoserine: serine 393 and serine 397. The stretch at 418–664 (NRIFRWKCHD…VFLAIAVDNL (247 aa)) is one II repeat. The chain crosses the membrane as a helical span at residues 433 to 451 (VFYWLVILIVALNTLSIAS). Residues 452 to 462 (EHHNQPLWLTR) are Extracellular-facing. A helical membrane pass occupies residues 463 to 483 (LQDIANRVLLSLFTTEMLMKM). Topologically, residues 484-494 (YGLGLRQYFMS) are cytoplasmic. A helical transmembrane segment spans residues 495–514 (IFNRFDCFVVCSGILEILLV). The Extracellular segment spans residues 515 to 523 (ESGAMTPLG). Residues 524 to 542 (ISVLRCIRLLRIFKITKYW) traverse the membrane as a helical segment. The Cytoplasmic portion of the chain corresponds to 543-561 (TSLSNLVASLLNSIRSIAS). A helical membrane pass occupies residues 562-581 (LLLLLFLFIVIFALLGMQLF). The Extracellular portion of the chain corresponds to 582-601 (GGRYDFEDTEVRRSNFDNFP). The pore-forming intramembrane region spans 602–623 (QALISVFQVLTGEDWTSMMYNG). Residues 612–615 (TGED) carry the Selectivity filter of repeat II motif. Glutamate 614 serves as a coordination point for Ca(2+). Over 624-633 (IMAYGGPSYP) the chain is Extracellular. Residues 634-653 (GMLVCIYFIILFVCGNYILL) traverse the membrane as a helical segment. The Cytoplasmic segment spans residues 654 to 799 (NVFLAIAVDN…VLCHRIVNAT (146 aa)). 2 disordered regions span residues 675–717 (KAKA…IPTT) and 731–757 (EVKD…LSPR). Serine 687 carries the phosphoserine; by PKA modification. The span at 690–711 (LPDKSEEEKSTMAKKLEQKPKG) shows a compositional bias: basic and acidic residues. The segment covering 742-751 (PGDDEEDEPE) has biased composition (acidic residues). Residues 747–760 (EDEPEIPLSPRPRP) form an interaction with STAC, STAC2 and STAC3 (via SH3 domains) region. The III repeat unit spans residues 786–1068 (NKIRVLCHRI…IFVGFVIVTF (283 aa)). The chain crosses the membrane as a helical span at residues 800–818 (WFTNFILLFILLSSAALAA). Over 819–830 (EDPIRADSMRNQ) the chain is Extracellular. A helical membrane pass occupies residues 831-850 (ILKHFDIGFTSVFTVEIVLK). The Cytoplasmic portion of the chain corresponds to 851–866 (MTTYGAFLHKGSFCRN). A helical membrane pass occupies residues 867-885 (YFNMLDLLVVAVSLISMGL). The Extracellular portion of the chain corresponds to 886–892 (ESSAISV). A helical transmembrane segment spans residues 893–911 (VKILRVLRVLRPLRAINRA). Residues 912–930 (KGLKHVVQCMFVAISTIGN) are Cytoplasmic-facing. The helical transmembrane segment at 931–950 (IVLVTTLLQFMFACIGVQLF) threads the bilayer. The Extracellular segment spans residues 951–1000 (KGKFFRCTDLSKMTEEECRGYYYVYKDGDPMQIELRHREWVHSDFHFDNV). Cysteine 957 and cysteine 968 are oxidised to a cystine. The tract at residues 988 to 1077 (REWVHSDFHF…FQEQGETEYK (90 aa)) is dihydropyridine binding. The pore-forming intramembrane region spans 1001-1021 (LSAMMSLFTVSTFEGWPQLLY). The short motif at 1012 to 1015 (TFEG) is the Selectivity filter of repeat III element. Position 1014 (glutamate 1014) interacts with Ca(2+). Topologically, residues 1022-1038 (KAIDSNAEDVGPIYNNR) are extracellular. Residues 1039–1060 (VEMAIFFIIYIILIAFFMMNIF) traverse the membrane as a helical segment. At 1061–1118 (VGFVIVTFQEQGETEYKNCELDKNQRQCVQYALKARPLRCYIPKNPYQYQVWYIVTSS) the chain is on the cytoplasmic side. The IV repeat unit spans residues 1105 to 1384 (NPYQYQVWYI…LFVAVIMDNF (280 aa)). Residues 1119-1140 (YFEYLMFALIMLNTICLGMQHY) form a helical membrane-spanning segment. N-linked (GlcNAc...) asparagine glycosylation is present at asparagine 1141. Topologically, residues 1141 to 1148 (NQSEQMNH) are extracellular. Residues 1149–1170 (ISDILNVAFTIIFTLEMILKLM) traverse the membrane as a helical segment. The Cytoplasmic segment spans residues 1171–1180 (AFKARGYFGD). A helical membrane pass occupies residues 1181–1200 (PWNVFDFLIVIGSIIDVILS). At 1201-1231 (EIDTFLASSGGLYCLGGGCGNVDPDESARIS) the chain is on the extracellular side. A helical transmembrane segment spans residues 1232-1250 (SAFFRLFRVMRLIKLLSRA). Topologically, residues 1251 to 1268 (EGVRTLLWTFIKSFQALP) are cytoplasmic. Residues 1269-1289 (YVALLIVMLFFIYAVIGMQMF) traverse the membrane as a helical segment. Topologically, residues 1290 to 1311 (GKIALVDGTQINRNNNFQTFPQ) are extracellular. Positions 1312-1330 (AVLLLFRCATGEAWQEILL) form an intramembrane region, pore-forming. The Selectivity filter of repeat IV signature appears at 1321 to 1324 (TGEA). The Extracellular portion of the chain corresponds to 1331–1356 (ACSYGKLCDPESDYAPGEEYTCGTNF). The dihydropyridine binding stretch occupies residues 1337 to 1403 (LCDPESDYAP…LGPHHLDEFK (67 aa)). A disulfide bridge links cysteine 1338 with cysteine 1352. Residues 1349-1391 (EYTCGTNFAYYYFISFYMLCAFLVINLFVAVIMDNFDYLTRDW) are phenylalkylamine binding. Residues 1357 to 1381 (AYYYFISFYMLCAFLVINLFVAVIM) form a helical membrane-spanning segment. The Cytoplasmic portion of the chain corresponds to 1382 to 1873 (DNFDYLTRDW…SQETLIPPRL (492 aa)). The segment at 1522–1542 (KFYATFLIQEHFRKFMKRQEE) is interaction with calmodulin. The residue at position 1575 (serine 1575) is a Phosphoserine; by PKA and CAMK2. Serine 1617 is modified (phosphoserine; by PKA). The segment at 1731–1780 (MPRGQAPPAPCQCPRVESSMPEDRKSSTPGSLHEETPHSRSTRENTSRCS) is disordered. Positions 1751–1776 (PEDRKSSTPGSLHEETPHSRSTRENT) are enriched in basic and acidic residues.

It belongs to the calcium channel alpha-1 subunit (TC 1.A.1.11) family. CACNA1S subfamily. As to quaternary structure, component of a calcium channel complex consisting of a pore-forming alpha subunit (CACNA1S) and the ancillary subunits CACNB1 or CACNB2, CACNG1 and CACNA2D1. The channel complex contains alpha, beta, gamma and delta subunits in a 1:1:1:1 ratio, i.e. it contains either CACNB1 or CACNB2. CACNA1S channel activity is modulated by the auxiliary subunits (CACNB1 or CACNB2, CACNG1 and CACNA2D1). Interacts with DYSF and JSRP1. Interacts with RYR1. Interacts with STAC, STAC2 and STAC3 (via their SH3 domains). Interacts with CALM. Post-translationally, the alpha-1S subunit is found in two isoforms in the skeletal muscle: a minor form of 212 kDa containing the complete amino acid sequence, and a major form of 190 kDa derived from the full-length form by post-translational proteolysis close to Phe-1690. Phosphorylated. Phosphorylation by PKA activates the calcium channel. Both the minor and major forms are phosphorylated in vitro by PKA. Phosphorylation at Ser-1575 is involved in beta-adrenergic-mediated regulation of the channel. In terms of tissue distribution, skeletal muscle specific.

The protein localises to the cell membrane. The protein resides in the sarcolemma. It is found in the T-tubule. It carries out the reaction Ca(2+)(in) = Ca(2+)(out). Channel activity is blocked by dihydropyridines (DHP), phenylalkylamines, and by benzothiazepines. In terms of biological role, pore-forming, alpha-1S subunit of the voltage-gated calcium channel that gives rise to L-type calcium currents in skeletal muscle. Calcium channels containing the alpha-1S subunit play an important role in excitation-contraction coupling in skeletal muscle via their interaction with RYR1, which triggers Ca(2+) release from the sarcoplasmic reticulum and ultimately results in muscle contraction. Long-lasting (L-type) calcium channels belong to the 'high-voltage activated' (HVA) group. The chain is Voltage-dependent L-type calcium channel subunit alpha-1S (CACNA1S) from Homo sapiens (Human).